Consider the following 906-residue polypeptide: Glutamate receptor 1 (906 aa).

The first 18 residues, 1–18, serve as a signal peptide directing secretion; it reads MQHIFAFFCTGFLGAVVG. Topologically, residues 19-536 are extracellular; it reads ANFPNNIQIG…GVFSFLDPLA (518 aa). 6 N-linked (GlcNAc...) asparagine glycosylation sites follow: asparagine 63, asparagine 249, asparagine 257, asparagine 363, asparagine 401, and asparagine 406. A disulfide bridge links cysteine 75 with cysteine 323. 3 residues coordinate L-glutamate: proline 492, threonine 494, and arginine 499. A helical transmembrane segment spans residues 537–557; that stretch reads YEIWMCIVFAYIGVSVVLFLV. Residues 558 to 584 are Cytoplasmic-facing; that stretch reads SRFSPYEWHSEEFEEGRDQTTSDQSNE. Residues 585-600 constitute an intramembrane region (helical; Pore-forming); sequence FGIFNSLWFSLGAFMQ. The stretch at 601 to 603 is an intramembrane region; the sequence is QGC. Residue cysteine 603 is the site of S-palmitoyl cysteine attachment. At 604–609 the chain is on the cytoplasmic side; the sequence is DISPRS. The chain crosses the membrane as a helical span at residues 610 to 630; sequence LSGRIVGGVWWFFTLIIISSY. The Extracellular portion of the chain corresponds to 631 to 805; it reads TANLAAFLTV…DKTSALSLSN (175 aa). Serine 645 is modified (phosphoserine). Residues serine 668 and threonine 669 each coordinate L-glutamate. Serine 710 is subject to Phosphoserine. Glutamate 719 contributes to the L-glutamate binding site. Cysteine 732 and cysteine 787 are disulfide-bonded. The helical transmembrane segment at 806 to 826 threads the bilayer; that stretch reads VAGVFYILIGGLGLAMLVALI. Topologically, residues 827–906 are cytoplasmic; it reads EFCYKSRSES…SGMPLGATGL (80 aa). The S-palmitoyl cysteine moiety is linked to residue cysteine 829. Phosphoserine occurs at positions 849 and 863. Residues 861-880 are disordered; it reads RNSGAGASSAGSGENGRVVS. Over residues 863 to 872 the composition is skewed to low complexity; that stretch reads SGAGASSAGS. The short motif at 903 to 906 is the PDZ-binding element; it reads ATGL.

It belongs to the glutamate-gated ion channel (TC 1.A.10.1) family. GRIA1 subfamily. As to quaternary structure, homotetramer or heterotetramer of pore-forming glutamate receptor subunits; heteromeric assembly can be the result of both receptor subtype and flip-flop forms and according the composition, one partner can be dominant with respect to the fast desensitizing current component, whereas the other can determine the steady-state component. Tetramers may be formed by the dimerization of dimers. Found in a complex with GRIA2, GRIA3, GRIA4, CNIH2, CNIH3, CACNG2, CACNG3, CACNG4, CACNG5, CACNG7 and CACNG8. Interacts with HIP1 and RASGRF2. Interacts with SYNDIG1 and GRIA2. Interacts with DLG1 (via C-terminus). Interacts with LRFN1. Interacts with PRKG2. Interacts with CNIH2 and CACNG2. Interacts with CACNG5; this interaction modulates the gating. Interacts (via C-terminus) with PDLIM4 (via LIM domain); this interaction as well as the interaction of PDLIM4 with alpha-actinin is required for their colocalization in early endosomes. Interacts with SNX27 (via PDZ domain); the interaction is required for recycling to the plasma membrane when endocytosed and prevent degradation in lysosomes. Interacts (via PDZ-binding motif) with SHANK3 (via PDZ domain). Interacts with CACNG3; associates GRIA1 with the adapter protein complex 4 (AP-4) to target GRIA1 to the somatodendritic compartment of neurons. Interacts with CACNG2; this interaction mediates traffick to the plasma membrane and modulation of desensitization. Interaction with CNIH2 and CNIH3; this interaction promotes expression at the plasma membrane and extensively modulates their gating properties by slowing deactivation and desensitization kinetics. Found in a complex with GRIA2, GRIA3, GRIA4, DLG4, CACNG8 and CNIH2. Phosphorylated at Ser-645. Phosphorylated at Ser-710 by PKC. Phosphorylated at Ser-849 by PKC, PKA and CAMK2. Phosphorylated at Ser-863 by PKC, PKA and PRKG2. Phosphorylation of Ser-863 is reduced by induction of long-term depression and increased by induction of long-term potentiation. Post-translationally, palmitoylated. Depalmitoylated by CPT1C and upon L-glutamate stimulation. ZDHHC3/GODZ specifically palmitoylates Cys-603, which leads to Golgi retention and decreased cell surface expression. In contrast, Cys-829 palmitoylation does not affect cell surface expression but regulates stimulation-dependent endocytosis.

The protein localises to the cell membrane. The protein resides in the endoplasmic reticulum membrane. It localises to the postsynaptic cell membrane. Its subcellular location is the postsynaptic density membrane. It is found in the cell projection. The protein localises to the dendrite. The protein resides in the dendritic spine. It localises to the early endosome membrane. Its subcellular location is the recycling endosome membrane. It is found in the presynapse. The protein localises to the synapse. It carries out the reaction Ca(2+)(in) = Ca(2+)(out). It catalyses the reaction Na(+)(in) = Na(+)(out). The catalysed reaction is Mg(2+)(in) = Mg(2+)(out). The enzyme catalyses Li(+)(in) = Li(+)(out). It carries out the reaction K(+)(in) = K(+)(out). It catalyses the reaction Sr(2+)(in) = Sr(2+)(out). Ionotropic glutamate receptor that functions as a ligand-gated cation channel, gated by L-glutamate and glutamatergic agonists such as alpha-amino-3-hydroxy-5-methyl-4-isoxazolepropionic acid (AMPA), quisqualic acid, and kainic acid. L-glutamate acts as an excitatory neurotransmitter at many synapses in the central nervous system. Binding of the excitatory neurotransmitter L-glutamate induces a conformation change, leading to the opening of the cation channel, and thereby converts the chemical signal to an electrical impulse upon entry of monovalent and divalent cations such as sodium and calcium. The receptor then desensitizes rapidly and enters in a transient inactive state, characterized by the presence of bound agonist. In the presence of CACNG2 or CACNG4 or CACNG7 or CACNG8, shows resensitization which is characterized by a delayed accumulation of current flux upon continued application of L-glutamate. Calcium (Ca(2+)) permeability depends on subunits composition and, heteromeric channels containing edited GRIA2 subunit are calcium-impermeable. Also permeable to other divalents cations such as strontium(2+) and magnesium(2+) and monovalent cations such as potassium(1+) and lithium(1+). In Macaca fascicularis (Crab-eating macaque), this protein is Glutamate receptor 1.